The chain runs to 331 residues: Dioxygenase swnH2 (331 aa).

Positions 1-11 (MINSDAQSAQK) are enriched in polar residues. The tract at residues 1 to 31 (MINSDAQSAQKQVEVEKPDEKYSAPRLLPPI) is disordered. Positions 13–23 (VEVEKPDEKYS) are enriched in basic and acidic residues. 3 residues coordinate Fe cation: histidine 173, aspartate 175, and histidine 250.

This sequence belongs to the PhyH family. Homodimer. Fe cation is required as a cofactor.

Its pathway is mycotoxin biosynthesis. Its function is as follows. Dioxygenase; part of the gene cluster that mediates the biosynthesis of swainsonine (SW), a cytotoxic fungal alkaloid and a potential cancer therapy drug. Swainsonine production occurs via a multibranched pathway and is dispensable for fungal colonization of plants and infection of insect hosts. The first step of swainsonine biosynthesis is the production of the precursor pipecolic acid (PA) via conversion of L-lysine (Lys) to 1-piperideine-6-carboxylate (P6C) by the aminotransferase swnA, the latter being further reduced to PA by the reductase swnR. PA can be converted from lysine by both the SW biosynthetic cluster and the unclustered genes such as lysine cyclodeaminase. The PKS-NRPS hybrid synthetase swnK uptakes and condensates PA and malonyl-CoA with and without skipping of the ketoreductase (KR) domain in order to produce 3 intermediates, 1-oxoindolizidine, (1S)-1-hydroxyindolizin, and (1R)-1-hydroxyindolizine; with the transisomer (1S)-1-hydroxyindolizin being predominant. The terminal thioester reductase (TE) domain of swnK is involved in reduction of the thioester bond to release the intermediate aldehydes. The oxidoreductase swnN could contribute to the reduction of 1-oxoindolizidine to (1S)-1-hydroxyindolizin and (1R)-1-hydroxyindolizine, contributing to the major route of SW production. The dioxygenase swnH2 would be responsible for the oxidization of (1R)-1-hydroxyindolizine into (1R,2S)-1,2-dihydroxyindolizine and of (1S)-1-hydroxyindolizin to yield both (1R,2S)-1,2-dihydroxyindolizine and (1S,2S)-1,2-dihydroxyindolizine. The dioxygenase swnH1 then performs the conversion of the 1,2-dihydroxyindolizine epimers to SW. The polypeptide is Dioxygenase swnH2 (Metarhizium robertsii (strain ARSEF 23 / ATCC MYA-3075) (Metarhizium anisopliae (strain ARSEF 23))).